A 684-amino-acid polypeptide reads, in one-letter code: DNA ligase (684 aa).

NAD(+) contacts are provided by residues 48–52, 97–98, and glutamate 129; these read DYEYD and SL. Catalysis depends on lysine 131, which acts as the N6-AMP-lysine intermediate. NAD(+)-binding residues include arginine 152, glutamate 189, lysine 310, and lysine 334. 4 residues coordinate Zn(2+): cysteine 429, cysteine 432, cysteine 447, and cysteine 452. One can recognise a BRCT domain in the interval 609 to 684; sequence AQEGSLSGMS…ISWEELQAMI (76 aa).

The protein belongs to the NAD-dependent DNA ligase family. LigA subfamily. Requires Mg(2+) as cofactor. Mn(2+) is required as a cofactor.

The enzyme catalyses NAD(+) + (deoxyribonucleotide)n-3'-hydroxyl + 5'-phospho-(deoxyribonucleotide)m = (deoxyribonucleotide)n+m + AMP + beta-nicotinamide D-nucleotide.. In terms of biological role, DNA ligase that catalyzes the formation of phosphodiester linkages between 5'-phosphoryl and 3'-hydroxyl groups in double-stranded DNA using NAD as a coenzyme and as the energy source for the reaction. It is essential for DNA replication and repair of damaged DNA. The protein is DNA ligase of Bdellovibrio bacteriovorus (strain ATCC 15356 / DSM 50701 / NCIMB 9529 / HD100).